The chain runs to 104 residues: Large ribosomal subunit protein bL21 (104 aa).

Belongs to the bacterial ribosomal protein bL21 family. As to quaternary structure, part of the 50S ribosomal subunit. Contacts protein L20.

This protein binds to 23S rRNA in the presence of protein L20. This Alkalilimnicola ehrlichii (strain ATCC BAA-1101 / DSM 17681 / MLHE-1) protein is Large ribosomal subunit protein bL21.